The chain runs to 194 residues: Putative L,D-transpeptidase YciB (194 aa).

The signal sequence occupies residues 1-19 (MKLSLFIIAVLMPVILLSA). Cys20 is lipidated: N-palmitoyl cysteine. Cys20 carries the S-diacylglycerol cysteine lipid modification. Residues 68 to 194 (VWIDVNVKEQ…IPEHTKVVIS (127 aa)) enclose the L,D-TPase catalytic domain. His144 functions as the Proton donor/acceptor in the catalytic mechanism. The active-site Nucleophile is Cys170.

Belongs to the YkuD family.

The protein localises to the cell membrane. It functions in the pathway cell wall biogenesis; peptidoglycan biosynthesis. This chain is Putative L,D-transpeptidase YciB (yciB), found in Bacillus subtilis (strain 168).